The chain runs to 738 residues: DNA repair and recombination protein RAD54-like (738 aa).

The segment at 1-31 (MRRSLAPSQVAKRKQGPDSDDEEDWEPDMEP) is disordered. Residues 18-29 (DSDDEEDWEPDM) are compositionally biased toward acidic residues. In terms of domain architecture, Helicase ATP-binding spans 164–339 (GRRIENSYGC…FSLVHFVNSG (176 aa)). 177–184 (DEMGLGKT) contributes to the ATP binding site. Positions 290–293 (DEGH) match the DEAH box motif. Residues 493-647 (LVLDYILAMT…CVVDEEQDVE (155 aa)) form the Helicase C-terminal domain. S566 and S567 each carry phosphoserine.

In terms of assembly, homohexamer. Interacts with RAD51. Post-translationally, phosphorylated. Phosphorylations at Ser-566 and Ser-567 allow efficient removal of RAD51 filaments from DNA.

It catalyses the reaction ATP + H2O = ADP + phosphate + H(+). Plays an essential role in homologous recombination (HR) which is a major pathway for repairing DNA double-strand breaks (DSBs), single-stranded DNA (ssDNA) gaps, and stalled or collapsed replication forks. Acts as a molecular motor during the homology search and guides RAD51 ssDNA along a donor dsDNA thereby changing the homology search from the diffusion-based mechanism to a motor-guided mechanism. Also plays an essential role in RAD51-mediated synaptic complex formation which consists of three strands encased in a protein filament formed once homology is recognized. Once DNA strand exchange occured, dissociates RAD51 from nucleoprotein filaments formed on dsDNA. The protein is DNA repair and recombination protein RAD54-like (rad54l) of Danio rerio (Zebrafish).